We begin with the raw amino-acid sequence, 395 residues long: Elongation factor Tu (395 aa).

Residues 10-204 enclose the tr-type G domain; that stretch reads KEHANIGTIG…AVDDYIPTPE (195 aa). The segment at 19–26 is G1; sequence GHVDHGKT. GTP is bound at residue 19-26; sequence GHVDHGKT. A Mg(2+)-binding site is contributed by threonine 26. Positions 60–64 are G2; the sequence is GITIN. The G3 stretch occupies residues 81–84; it reads DCPG. Residues 81-85 and 136-139 contribute to the GTP site; these read DCPGH and NKAD. The interval 136-139 is G4; the sequence is NKAD. Residues 174 to 176 are G5; it reads SAL.

Belongs to the TRAFAC class translation factor GTPase superfamily. Classic translation factor GTPase family. EF-Tu/EF-1A subfamily. In terms of assembly, monomer.

The protein resides in the cytoplasm. The enzyme catalyses GTP + H2O = GDP + phosphate + H(+). Its function is as follows. GTP hydrolase that promotes the GTP-dependent binding of aminoacyl-tRNA to the A-site of ribosomes during protein biosynthesis. The protein is Elongation factor Tu of Staphylococcus carnosus (strain TM300).